The following is a 126-amino-acid chain: Putative phosphotransferase enzyme IIB component UU178 (126 aa).

The helical transmembrane segment at 11–31 (LIIFLGIITFGIFIIYFFTKA) threads the bilayer. The PTS EIIB type-1 domain occupies 49 to 126 (PFSLNDFYNC…KELIKKDLFS (78 aa)).

To M.genitalium MG129 and M.pneumoniae MPN268.

Its subcellular location is the membrane. Its function is as follows. The phosphoenolpyruvate-dependent sugar phosphotransferase system (PTS), a major carbohydrate active -transport system, catalyzes the phosphorylation of incoming sugar substrates concomitant with their translocation across the cell membrane. The sequence is that of Putative phosphotransferase enzyme IIB component UU178 from Ureaplasma parvum serovar 3 (strain ATCC 700970).